Here is a 908-residue protein sequence, read N- to C-terminus: Magnesium-transporting ATPase, P-type 1 (908 aa).

A compositionally biased stretch (basic and acidic residues) spans 1–20 (MTDMNIENRKLNRPASENDK). The segment at 1–21 (MTDMNIENRKLNRPASENDKQ) is disordered. The Cytoplasmic segment spans residues 1 to 80 (MTDMNIENRK…QVPPALIQLL (80 aa)). Residues 81–101 (QAFNNPFIYVLMALAGVSFIT) traverse the membrane as a helical segment. Residues 102 to 113 (DYWLPLRRGEET) lie on the Extracellular side of the membrane. A helical transmembrane segment spans residues 114-134 (DLTGVLIILTMVSLSGLLRFW). Residues 135–293 (QEFRTNRAAQ…QTAFDRGVNS (159 aa)) lie on the Cytoplasmic side of the membrane. The helical transmembrane segment at 294 to 314 (VSWLLIRFMLIMVPVVLLING) threads the bilayer. At 315–323 (FSKGDWVEA) the chain is on the extracellular side. Residues 324-341 (SLFALAVAVGLTPEMLPM) form a helical membrane-spanning segment. Residue glutamate 337 coordinates Mg(2+). Residues 342 to 704 (IVSSNLAKGA…IKGRETFGNI (363 aa)) are Cytoplasmic-facing. Aspartate 379 acts as the 4-aspartylphosphate intermediate in catalysis. Mg(2+)-binding residues include aspartate 650, aspartate 654, and asparagine 718. The chain crosses the membrane as a helical span at residues 705–724 (IKYLNMTASSNFGNVFSVLV). Topologically, residues 725–733 (ASAFIPFLP) are extracellular. Residues 734–753 (MLAIHLLIQNLMYDISQLSL) form a helical membrane-spanning segment. Residues asparagine 743 and aspartate 747 each contribute to the Mg(2+) site. The Cytoplasmic portion of the chain corresponds to 754–775 (PWDKMDKEFLRKPRKWDAKNIG). A helical transmembrane segment spans residues 776–799 (RFMLWIGPTSSIFDITTFALMWYV). At 800–808 (FAANNVEAQ) the chain is on the extracellular side. Residues 809-827 (ALFQSGWFIEGLLSQTLVV) form a helical membrane-spanning segment. Residues 828–840 (HMLRTQKIPFIQS) are Cytoplasmic-facing. Residues 841-860 (RATLPVLLTTGLIMAIGIYI) traverse the membrane as a helical segment. The Extracellular segment spans residues 861–875 (PFSPLGAMVGLEPLP). The helical transmembrane segment at 876 to 895 (LSYFPWLVATLLSYCLVAQG) threads the bilayer. The Cytoplasmic segment spans residues 896 to 908 (MKRFYIKRFGQWF).

This sequence belongs to the cation transport ATPase (P-type) (TC 3.A.3) family. Type IIIB subfamily.

It localises to the cell inner membrane. It carries out the reaction Mg(2+)(out) + ATP + H2O = Mg(2+)(in) + ADP + phosphate + H(+). Mediates magnesium influx to the cytosol. This is Magnesium-transporting ATPase, P-type 1 (mgtB) from Salmonella typhimurium (strain LT2 / SGSC1412 / ATCC 700720).